The primary structure comprises 145 residues: Putative pre-16S rRNA nuclease (145 aa).

The protein belongs to the YqgF nuclease family.

The protein localises to the cytoplasm. Its function is as follows. Could be a nuclease involved in processing of the 5'-end of pre-16S rRNA. The polypeptide is Putative pre-16S rRNA nuclease (Prochlorococcus marinus (strain MIT 9211)).